Consider the following 292-residue polypeptide: Protease HtpX (292 aa).

The next 2 helical transmembrane spans lie at 4–24 (IILF…ILAV) and 32–52 (IYGL…LSLI). H139 provides a ligand contact to Zn(2+). Residue E140 is part of the active site. H143 is a Zn(2+) binding site. A run of 2 helical transmembrane segments spans residues 150-170 (ITMT…SRII) and 193-213 (FLFF…ASII). E222 is a Zn(2+) binding site.

This sequence belongs to the peptidase M48B family. It depends on Zn(2+) as a cofactor.

Its subcellular location is the cell membrane. This chain is Protease HtpX, found in Buchnera aphidicola subsp. Schizaphis graminum (strain Sg).